We begin with the raw amino-acid sequence, 284 residues long: 4-diphosphocytidyl-2-C-methyl-D-erythritol kinase (284 aa).

K14 is a catalytic residue. Position 98–108 (P98–S108) interacts with ATP. The active site involves D140.

This sequence belongs to the GHMP kinase family. IspE subfamily.

The enzyme catalyses 4-CDP-2-C-methyl-D-erythritol + ATP = 4-CDP-2-C-methyl-D-erythritol 2-phosphate + ADP + H(+). It participates in isoprenoid biosynthesis; isopentenyl diphosphate biosynthesis via DXP pathway; isopentenyl diphosphate from 1-deoxy-D-xylulose 5-phosphate: step 3/6. Catalyzes the phosphorylation of the position 2 hydroxy group of 4-diphosphocytidyl-2C-methyl-D-erythritol. This Shewanella oneidensis (strain ATCC 700550 / JCM 31522 / CIP 106686 / LMG 19005 / NCIMB 14063 / MR-1) protein is 4-diphosphocytidyl-2-C-methyl-D-erythritol kinase.